A 266-amino-acid chain; its full sequence is Imidazole glycerol phosphate synthase subunit HisF (266 aa).

Catalysis depends on residues D11 and D130. Residues 134-157 (RTPEEAARPGPDGAPRGEGWDVYS) form a disordered region.

Belongs to the HisA/HisF family. Heterodimer of HisH and HisF.

It is found in the cytoplasm. It catalyses the reaction 5-[(5-phospho-1-deoxy-D-ribulos-1-ylimino)methylamino]-1-(5-phospho-beta-D-ribosyl)imidazole-4-carboxamide + L-glutamine = D-erythro-1-(imidazol-4-yl)glycerol 3-phosphate + 5-amino-1-(5-phospho-beta-D-ribosyl)imidazole-4-carboxamide + L-glutamate + H(+). It participates in amino-acid biosynthesis; L-histidine biosynthesis; L-histidine from 5-phospho-alpha-D-ribose 1-diphosphate: step 5/9. In terms of biological role, IGPS catalyzes the conversion of PRFAR and glutamine to IGP, AICAR and glutamate. The HisF subunit catalyzes the cyclization activity that produces IGP and AICAR from PRFAR using the ammonia provided by the HisH subunit. The polypeptide is Imidazole glycerol phosphate synthase subunit HisF (Paracidovorax citrulli (strain AAC00-1) (Acidovorax citrulli)).